A 419-amino-acid polypeptide reads, in one-letter code: Acyl-coenzyme A thioesterase 6 (419 aa).

Catalysis depends on charge relay system residues S232, D324, and H358. The Peroxisome targeting signal motif lies at 417-419; sequence SKL.

This sequence belongs to the C/M/P thioester hydrolase family. As to expression, highly expressed in white adipose tissue. Detected at lower levels in kidney, liver, brown adipose tissue and brain.

The protein resides in the peroxisome. It catalyses the reaction pristanoyl-CoA + H2O = 2,6,10,14-tetramethylpentadecanoate + CoA + H(+). The catalysed reaction is phytanoyl-CoA + H2O = 3,7,11,15-tetramethylhexadecanoate + CoA + H(+). The protein operates within lipid metabolism; fatty acid metabolism. Catalyzes the hydrolysis of acyl-CoAs into free fatty acids and coenzyme A (CoASH), regulating their respective intracellular levels. Catalyzes the hydrolysis of phytanoyl-CoA and pristanoyl-CoA, two methyl-branched fatty acids derived from phytol, that enter the body via the diet. The protein is Acyl-coenzyme A thioesterase 6 of Mus musculus (Mouse).